The following is a 492-amino-acid chain: Mitochondrial distribution and morphology protein 12 (492 aa).

Residues Met-1 to Val-492 form the SMP-LTD domain. Disordered regions lie at residues Asp-68 to Gly-158, Leu-199 to Arg-301, and Ala-379 to Asn-434. The segment covering Val-78–Val-90 has biased composition (acidic residues). Residues Ser-130 to Met-139 show a composition bias toward gly residues. Residues Leu-246–Ser-257 are compositionally biased toward low complexity. A compositionally biased stretch (polar residues) spans Thr-270–Glu-285. The span at Gly-387–Gly-400 shows a compositional bias: low complexity. Residues Gln-401–Pro-415 show a composition bias toward gly residues. A compositionally biased stretch (low complexity) spans Gly-416–Gly-428.

Belongs to the MDM12 family. In terms of assembly, component of the ER-mitochondria encounter structure (ERMES) or MDM complex, composed of MMM1, MDM10, MDM12 and MDM34. An MMM1 homodimer associates with one molecule of MDM12 on each side in a pairwise head-to-tail manner, and the SMP-LTD domains of MMM1 and MDM12 generate a continuous hydrophobic tunnel for phospholipid trafficking.

It is found in the mitochondrion outer membrane. The protein localises to the endoplasmic reticulum membrane. In terms of biological role, component of the ERMES/MDM complex, which serves as a molecular tether to connect the endoplasmic reticulum (ER) and mitochondria. Components of this complex are involved in the control of mitochondrial shape and protein biogenesis, and function in nonvesicular lipid trafficking between the ER and mitochondria. MDM12 is required for the interaction of the ER-resident membrane protein MMM1 and the outer mitochondrial membrane-resident beta-barrel protein MDM10. The MDM12-MMM1 subcomplex functions in the major beta-barrel assembly pathway that is responsible for biogenesis of all mitochondrial outer membrane beta-barrel proteins, and acts in a late step after the SAM complex. The MDM10-MDM12-MMM1 subcomplex further acts in the TOM40-specific pathway after the action of the MDM12-MMM1 complex. Essential for establishing and maintaining the structure of mitochondria and maintenance of mtDNA nucleoids. This is Mitochondrial distribution and morphology protein 12 from Chaetomium globosum (strain ATCC 6205 / CBS 148.51 / DSM 1962 / NBRC 6347 / NRRL 1970) (Soil fungus).